Reading from the N-terminus, the 554-residue chain is Hydroxylamine reductase (554 aa).

Positions 3, 6, 18, and 25 each coordinate [2Fe-2S] cluster. Hybrid [4Fe-2O-2S] cluster contacts are provided by His252, Glu276, Cys320, Cys408, Cys436, Cys461, Glu495, and Lys497. Cys408 is subject to Cysteine persulfide.

Belongs to the HCP family. Requires [2Fe-2S] cluster as cofactor. The cofactor is hybrid [4Fe-2O-2S] cluster.

It is found in the cytoplasm. The catalysed reaction is A + NH4(+) + H2O = hydroxylamine + AH2 + H(+). Functionally, catalyzes the reduction of hydroxylamine to form NH(3) and H(2)O. This is Hydroxylamine reductase from Shewanella pealeana (strain ATCC 700345 / ANG-SQ1).